The following is a 231-amino-acid chain: MARLTKRQKAIREKIDPAQQYPVAEALGLLRELPGAKFTESVEVAVNLGVDPRKSDQIVRGSTVLPNGTGKTVRVAVFAQGDAAEAAKEAGADIVGMDDLAEQVKGGNLDFDVVVAAPDAMGVVGRLGPILGPRGLMPNPKVGTVTPDVAGAVKNAKAGQVRYRTDKGGIIHCAIGKVDFEVEALQQNLQALITDLQKLKPANSKGVYLKKVAVSTTMGPGLAVDLASLET.

Belongs to the universal ribosomal protein uL1 family. In terms of assembly, part of the 50S ribosomal subunit.

In terms of biological role, binds directly to 23S rRNA. The L1 stalk is quite mobile in the ribosome, and is involved in E site tRNA release. Protein L1 is also a translational repressor protein, it controls the translation of the L11 operon by binding to its mRNA. The sequence is that of Large ribosomal subunit protein uL1 from Alkalilimnicola ehrlichii (strain ATCC BAA-1101 / DSM 17681 / MLHE-1).